The primary structure comprises 168 residues: Bifunctional protein PyrR (168 aa).

Substrate contacts are provided by residues 36-37 (TG), Arg-77, 94-102 (DDVLMSGRT), and Val-151. Positions 90 to 102 (LVLIDDVLMSGRT) match the PRPP-binding motif.

This sequence belongs to the purine/pyrimidine phosphoribosyltransferase family. PyrR subfamily.

The enzyme catalyses UMP + diphosphate = 5-phospho-alpha-D-ribose 1-diphosphate + uracil. Its function is as follows. Regulates the transcription of the pyrimidine nucleotide (pyr) operon in response to exogenous pyrimidines. In terms of biological role, also displays a weak uracil phosphoribosyltransferase activity which is not physiologically significant. The chain is Bifunctional protein PyrR from Pseudomonas fluorescens.